The sequence spans 1082 residues: Probable arabinosyltransferase B (1082 aa).

The next 13 helical transmembrane spans lie at Trp28–Thr50, Leu223–Trp241, Val262–Ala281, Ser333–Ser352, Leu359–Trp381, Ala420–Leu442, Trp462–Ala481, Ala522–Leu544, Ala557–Thr574, Trp578–Val600, Ala613–Val635, Gly650–Leu672, and Ala689–Val711.

Belongs to the emb family.

The protein localises to the cell membrane. Functionally, arabinosyl transferase responsible for the polymerization of arabinose into the arabinan of arabinogalactan. This Mycolicibacterium smegmatis (Mycobacterium smegmatis) protein is Probable arabinosyltransferase B (embB).